The primary structure comprises 863 residues: DNA mismatch repair protein MutS (863 aa).

An ATP-binding site is contributed by 617-624 (GPNMGGKS).

Belongs to the DNA mismatch repair MutS family.

Its function is as follows. This protein is involved in the repair of mismatches in DNA. It is possible that it carries out the mismatch recognition step. This protein has a weak ATPase activity. The polypeptide is DNA mismatch repair protein MutS (Pseudomonas fluorescens (strain SBW25)).